Reading from the N-terminus, the 1459-residue chain is Endogenous retrovirus group K member 7 Pol protein (1459 aa).

The Reverse transcriptase domain occupies 57 to 245; that stretch reads LEKGHIEPSF…TPFHYLGMQI (189 aa). An LPQG motif is present at residues 161 to 164; it reads LPQG. Positions 195 to 198 match the YXDD motif; the sequence is YIDD. Residues 460–590 enclose the RNase H type-1 domain; the sequence is LENALTVFTD…ADLLVSSALI (131 aa). Mg(2+) contacts are provided by Asp-469, Glu-497, Asp-517, and Asp-582. The segment at 587 to 628 adopts an Integrase-type zinc-finger fold; the sequence is SALIKAQELHALTHVNAAGLKNKFDVTWKQAKDIVQHCTQCQ. Zn(2+) contacts are provided by His-596, His-600, Cys-624, and Cys-627. Residues 642 to 803 enclose the Integrase catalytic domain; the sequence is RGLCPNALWQ…TSAEQHLTGK (162 aa). Positions 811–859 form a DNA-binding region, integrase-type; the sequence is KLIWWKDNKNKTWEIGKVITWGRGFACVSPGENQLPVWIPTRHLKFYNE.

The protein belongs to the beta type-B retroviral polymerase family. HERV class-II K(HML-2) pol subfamily.

It catalyses the reaction DNA(n) + a 2'-deoxyribonucleoside 5'-triphosphate = DNA(n+1) + diphosphate. It carries out the reaction Endonucleolytic cleavage to 5'-phosphomonoester.. Early post-infection, the reverse transcriptase converts the viral RNA genome into double-stranded viral DNA. The RNase H domain of the reverse transcriptase performs two functions. It degrades the RNA template and specifically removes the RNA primer from the RNA/DNA hybrid. Following nuclear import, the integrase catalyzes the insertion of the linear, double-stranded viral DNA into the host cell chromosome. Endogenous Pol proteins may have kept, lost or modified their original function during evolution. This Homo sapiens (Human) protein is Endogenous retrovirus group K member 7 Pol protein (ERVK-7).